A 25-amino-acid polypeptide reads, in one-letter code: Omega conotoxin-CVIF (25 aa).

3 cysteine pairs are disulfide-bonded: cysteine 1–cysteine 16, cysteine 8–cysteine 20, and cysteine 15–cysteine 25. Position 25 is a cysteine amide (cysteine 25).

It belongs to the conotoxin O1 superfamily. In terms of tissue distribution, expressed by the venom duct.

It localises to the secreted. Functionally, omega-conotoxins act at presynaptic membranes, they bind and block voltage-gated calcium channels. This toxin blocks N-type calcium channels (Cav2.2/CACNA1B). It shows a higher potency when Cav2.2/CACNA1B is only expressed with the ancillary subunit CACNB3 (IC(50)=0.1 nM) than on Cav2.2/CACNA1B expressed with the ancillary subunits CACNA2D1 and CACNB3 (IC(50)=19.9 nM). The Cav2.2/CACNA1B block by this toxin is voltage-independent, whereas the recovery from toxin block is voltage-dependent. There is a low recovery at physiological membrane potential and a high recovery with hyperpolarized potential. This indicates that the toxin has a higher affinity for Cav2.2/CACNA1B in the inactivated state. It is noteworthy that ancillary subunits beta modulate recovery from this toxin block. Cav2.2/CACNA1B expressed with the ancillary subunit CACNB2a (isoform 2a) almost recover completely from this toxin block, whereas an expression with CACNB3 exhibits relatively weak recovery. Inhibition by this toxin of excitatory synaptic transmission is reversible. In vivo, when tested on rat model of persistent pain, this toxin blocks chronic pain behavior. This Conus catus (Cat cone) protein is Omega conotoxin-CVIF.